We begin with the raw amino-acid sequence, 577 residues long: Sensory neuron membrane protein 2 (577 aa).

Over 1 to 6 (MVQCTL) the chain is Cytoplasmic. A helical membrane pass occupies residues 7–27 (IWAGIGAMMAVSGALLGWVVF). Over 28–519 (PRAVHEKVIE…LMKVLSLLDV (492 aa)) the chain is Extracellular. 4 N-linked (GlcNAc...) asparagine glycosylation sites follow: asparagine 66, asparagine 161, asparagine 271, and asparagine 307. Disulfide bonds link cysteine 316/cysteine 384, cysteine 345/cysteine 411, and cysteine 386/cysteine 400. Residues 520-540 (VQWVLIGVGLLLAVLMPTVYF) form a helical membrane-spanning segment. Over 541–577 (VKRCRGEGSRTVSPAVTATTSAASLSTVAGVTGDRSK) the chain is Cytoplasmic.

This sequence belongs to the CD36 family.

It is found in the cell membrane. Functionally, plays an olfactory role that is not restricted to pheromone sensitivity. The polypeptide is Sensory neuron membrane protein 2 (Anopheles gambiae (African malaria mosquito)).